Reading from the N-terminus, the 387-residue chain is 3-ketoacyl-CoA thiolase (387 aa).

Cysteine 91 functions as the Acyl-thioester intermediate in the catalytic mechanism. Active-site proton acceptor residues include histidine 343 and cysteine 373.

Belongs to the thiolase-like superfamily. Thiolase family. In terms of assembly, heterotetramer of two alpha chains (FadB) and two beta chains (FadA).

It localises to the cytoplasm. It carries out the reaction an acyl-CoA + acetyl-CoA = a 3-oxoacyl-CoA + CoA. It functions in the pathway lipid metabolism; fatty acid beta-oxidation. In terms of biological role, catalyzes the final step of fatty acid oxidation in which acetyl-CoA is released and the CoA ester of a fatty acid two carbons shorter is formed. This Klebsiella pneumoniae subsp. pneumoniae (strain ATCC 700721 / MGH 78578) protein is 3-ketoacyl-CoA thiolase.